The primary structure comprises 87 residues: Phospholemman (87 aa).

A signal peptide spans 1 to 20 (MASLSHILVLWVGILTVVNA). Residues 21–35 (EAPQEHDPFTYDYQS) are Extracellular-facing. The chain crosses the membrane as a helical span at residues 36–56 (LRIGGLIIAGILFILGILIVL). The Cytoplasmic portion of the chain corresponds to 57 to 87 (SRRCRCKFNQQQSLGKMRSPHLAAQFSSESC). Cysteine 60 carries S-palmitoyl cysteine lipidation. Cysteine 62 is modified (S-glutathionyl cysteine; alternate). A lipid anchor (S-palmitoyl cysteine; alternate) is attached at cysteine 62. Phosphoserine; by PKA and PKC is present on serine 75. Residue serine 83 is modified to Phosphoserine; by PKA.

This sequence belongs to the FXYD family. Homotetramer. Monomer. Regulatory subunit of the sodium/potassium-transporting ATPase (NKA) which is composed of a catalytic alpha subunit, a non-catalytic beta subunit and an additional regulatory subunit. The monomeric form associates with NKA while the oligomeric form does not. Interacts with the catalytic alpha-1 subunit ATP1A1. Also interacts with the catalytic alpha-2 and alpha-3 subunits ATP1A2 and ATP1A3. Very little interaction with ATP1A1, ATP1A2 or ATP1A3 when phosphorylated at Ser-83. Interacts with the non-catalytic beta-1 subunit ATP1B1. Oxidative stress decreases interaction with ATP1A1 but increases interaction with ATP1B1. In terms of processing, major plasma membrane substrate for cAMP-dependent protein kinase (PKA) and protein kinase C (PKC) in several different tissues. Phosphorylated in response to insulin and adrenergic stimulation. Phosphorylation at Ser-83 stimulates sodium/potassium-transporting ATPase activity while the unphosphorylated form inhibits sodium/potassium-transporting ATPase activity. Phosphorylation increases tetramerization, decreases binding to ATP1A1 and reduces inhibition of ATP1A1 activity. Phosphorylation at Ser-75 leads to greatly reduced interaction with ATP1A1, ATP1A2 and ATP1A3. May be phosphorylated by DMPK. Palmitoylation increases half-life and stability and is enhanced upon phosphorylation at Ser-83 by PKA.

Its subcellular location is the cell membrane. The protein resides in the sarcolemma. The protein localises to the apical cell membrane. It is found in the membrane. It localises to the caveola. Its subcellular location is the T-tubule. Its function is as follows. Associates with and regulates the activity of the sodium/potassium-transporting ATPase (NKA) which transports Na(+) out of the cell and K(+) into the cell. Inhibits NKA activity in its unphosphorylated state and stimulates activity when phosphorylated. Reduces glutathionylation of the NKA beta-1 subunit ATP1B1, thus reversing glutathionylation-mediated inhibition of ATP1B1. Contributes to female sexual development by maintaining the excitability of neurons which secrete gonadotropin-releasing hormone. The polypeptide is Phospholemman (Sus scrofa (Pig)).